Reading from the N-terminus, the 172-residue chain is MKKLFLKLMKRNLSEDKIRKLGVQVGNDCRFLSVDRSTFGSEPYLIQIGNHVTITSGVKFATHDGGVWIFRKKYPEIDNFHRIFIGNNVFIGINSIILPGVTIGNNVVVGAGSVVTKDVPDNVIIGGNPAKKIKSIEAYETKILENADYTKKLNYNEKKIYLLNKFKENRYN.

The protein belongs to the transferase hexapeptide repeat family.

It participates in capsule biogenesis; capsule polysaccharide biosynthesis. In terms of biological role, required for the biosynthesis of type 1 capsular polysaccharide. The chain is Protein CapG (capG) from Staphylococcus aureus.